A 426-amino-acid chain; its full sequence is Glutamate-1-semialdehyde 2,1-aminomutase (426 aa).

N6-(pyridoxal phosphate)lysine is present on Lys265.

This sequence belongs to the class-III pyridoxal-phosphate-dependent aminotransferase family. HemL subfamily. In terms of assembly, homodimer. Requires pyridoxal 5'-phosphate as cofactor.

The protein localises to the cytoplasm. The catalysed reaction is (S)-4-amino-5-oxopentanoate = 5-aminolevulinate. It participates in porphyrin-containing compound metabolism; protoporphyrin-IX biosynthesis; 5-aminolevulinate from L-glutamyl-tRNA(Glu): step 2/2. The polypeptide is Glutamate-1-semialdehyde 2,1-aminomutase (Actinobacillus pleuropneumoniae serotype 7 (strain AP76)).